A 285-amino-acid chain; its full sequence is (3S)-malyl-CoA thioesterase (285 aa).

Residues R70 and E122 each contribute to the substrate site. Positions 122 and 148 each coordinate Mg(2+).

The protein belongs to the HpcH/HpaI aldolase family. Homodimer or homotrimer. Requires Mg(2+) as cofactor.

It carries out the reaction (S)-malyl-CoA + H2O = (S)-malate + CoA + H(+). Functionally, catalyzes the hydrolysis of (3S)-malyl-CoA to (3S)-malate and free CoA. Inactive towards beta-methylmalyl-CoA and other CoA esters. In Cereibacter sphaeroides (strain ATCC 17025 / ATH 2.4.3) (Rhodobacter sphaeroides), this protein is (3S)-malyl-CoA thioesterase.